Reading from the N-terminus, the 228-residue chain is Putative N-acetylmannosamine-6-phosphate 2-epimerase (228 aa).

It belongs to the NanE family.

The enzyme catalyses an N-acyl-D-glucosamine 6-phosphate = an N-acyl-D-mannosamine 6-phosphate. The protein operates within amino-sugar metabolism; N-acetylneuraminate degradation; D-fructose 6-phosphate from N-acetylneuraminate: step 3/5. Its function is as follows. Converts N-acetylmannosamine-6-phosphate (ManNAc-6-P) to N-acetylglucosamine-6-phosphate (GlcNAc-6-P). The chain is Putative N-acetylmannosamine-6-phosphate 2-epimerase from Thermosynechococcus vestitus (strain NIES-2133 / IAM M-273 / BP-1).